A 161-amino-acid chain; its full sequence is Small ribosomal subunit protein uS9 (161 aa).

Belongs to the universal ribosomal protein uS9 family.

This is Small ribosomal subunit protein uS9 from Rickettsia typhi (strain ATCC VR-144 / Wilmington).